Reading from the N-terminus, the 235-residue chain is tRNA (guanine-N(1)-)-methyltransferase (235 aa).

S-adenosyl-L-methionine-binding positions include G114 and 134–139 (IGDYIL).

This sequence belongs to the RNA methyltransferase TrmD family. In terms of assembly, homodimer.

It is found in the cytoplasm. It catalyses the reaction guanosine(37) in tRNA + S-adenosyl-L-methionine = N(1)-methylguanosine(37) in tRNA + S-adenosyl-L-homocysteine + H(+). Functionally, specifically methylates guanosine-37 in various tRNAs. This Ehrlichia ruminantium (strain Gardel) protein is tRNA (guanine-N(1)-)-methyltransferase.